The following is a 1406-amino-acid chain: Protein FAM135B (1406 aa).

Disordered regions lie at residues 519–548 (WTGQ…DGQA) and 770–820 (SVSA…GDSG). Ser-777 and Ser-778 each carry phosphoserine. Residues 804 to 816 (KSQGSPGSCSQLC) are compositionally biased toward polar residues.

Belongs to the FAM135 family.

The polypeptide is Protein FAM135B (FAM135B) (Homo sapiens (Human)).